Consider the following 421-residue polypeptide: GTPase Obg (421 aa).

The Obg domain occupies 1–158 (MFIDVAKIEL…KTIKLELKLL (158 aa)). Positions 21-40 (AFRREKYEPSGGPAGGDGGD) are disordered. In terms of domain architecture, OBG-type G spans 159-328 (ADVGLIGLPN…LMYLIADTLD (170 aa)). Residues 165–172 (GLPNVGKS), 190–194 (FTTLE), 211–214 (DIPG), 281–284 (NKTD), and 309–311 (SAA) each bind GTP. Mg(2+) contacts are provided by Ser172 and Thr192. An OCT domain is found at 344 to 421 (FEEEKEPDFK…IGDVEFDFYE (78 aa)).

This sequence belongs to the TRAFAC class OBG-HflX-like GTPase superfamily. OBG GTPase family. As to quaternary structure, monomer. Requires Mg(2+) as cofactor.

It is found in the cytoplasm. Its function is as follows. An essential GTPase which binds GTP, GDP and possibly (p)ppGpp with moderate affinity, with high nucleotide exchange rates and a fairly low GTP hydrolysis rate. Plays a role in control of the cell cycle, stress response, ribosome biogenesis and in those bacteria that undergo differentiation, in morphogenesis control. This Finegoldia magna (strain ATCC 29328 / DSM 20472 / WAL 2508) (Peptostreptococcus magnus) protein is GTPase Obg.